We begin with the raw amino-acid sequence, 168 residues long: uncharacterized protein (168 aa).

A helical membrane pass occupies residues 5–24 (IAWASACLLLVMLTGFFTIG).

It localises to the membrane. This is an uncharacterized protein from Bacillus subtilis (strain 168).